The primary structure comprises 287 residues: Transcription initiation factor IIB 1 (287 aa).

A TFIIB-type zinc finger spans residues histidine 3–threonine 31. Positions 7, 10, 23, and 26 each coordinate Zn(2+). Residues glutamate 40–glutamate 53 are compositionally biased toward basic and acidic residues. The disordered stretch occupies residues glutamate 40 to arginine 63. 2 consecutive repeat copies span residues threonine 111–leucine 194 and glutamate 205–aspartate 286.

This sequence belongs to the TFIIB family.

Stabilizes TBP binding to an archaeal box-A promoter. Also responsible for recruiting RNA polymerase II to the pre-initiation complex (DNA-TBP-TFIIB). The sequence is that of Transcription initiation factor IIB 1 from Halobacterium salinarum (strain ATCC 700922 / JCM 11081 / NRC-1) (Halobacterium halobium).